A 98-amino-acid polypeptide reads, in one-letter code: Probable sodium channel toxin Ts27 (98 aa).

A signal peptide spans 1–22 (MYNMVSLFIVAVLLLTYANVEG). 4 disulfides stabilise this stretch: Cys36–Cys88, Cys40–Cys63, Cys49–Cys68, and Cys53–Cys70.

Belongs to the long (4 C-C) scorpion toxin superfamily. Sodium channel inhibitor family. Expressed by the venom gland.

It is found in the secreted. Its function is as follows. Probable sodium channel toxin. In Tityus serrulatus (Brazilian scorpion), this protein is Probable sodium channel toxin Ts27.